We begin with the raw amino-acid sequence, 149 residues long: Calmodulin (149 aa).

Residue Ala2 is modified to N-acetylalanine. EF-hand domains follow at residues 8–43, 44–79, 81–116, and 117–149; these read EQIAEFKEAFALFDKDGDGTITTKELGTVMRSLGQN, PTEAELQDMINEVDADGNGTIDFPEFLSLMARKMKE, DSEEELIEAFKVFDRDGNGLISAAELRHVMTNLGEK, and LTDDEVDEMIREADIDGDGHINYEEFVRMMVSK. Lys14 bears the N6,N6-dimethyllysine mark. Ca(2+) is bound by residues Asp21, Asp23, Asp25, Thr27, Glu32, Asp57, Asp59, Asn61, Thr63, Glu68, Asp94, Asp96, Asn98, and Glu105. N6,N6,N6-trimethyllysine is present on Lys116. Asp130, Asp132, Asp134, His136, and Glu141 together coordinate Ca(2+).

The protein belongs to the calmodulin family. The pantophobiac mutant CAM2 is undermethylated on Lys-116.

Calmodulin mediates the control of a large number of enzymes, ion channels and other proteins by Ca(2+). Among the enzymes to be stimulated by the calmodulin-Ca(2+) complex are a number of protein kinases and phosphatases. The protein is Calmodulin (CAM) of Paramecium tetraurelia.